Consider the following 343-residue polypeptide: Protein RecA (343 aa).

64–71 (GPESSGKT) is a binding site for ATP.

This sequence belongs to the RecA family.

It is found in the cytoplasm. Its function is as follows. Can catalyze the hydrolysis of ATP in the presence of single-stranded DNA, the ATP-dependent uptake of single-stranded DNA by duplex DNA, and the ATP-dependent hybridization of homologous single-stranded DNAs. It interacts with LexA causing its activation and leading to its autocatalytic cleavage. In Bacillus mycoides (strain KBAB4) (Bacillus weihenstephanensis), this protein is Protein RecA.